Reading from the N-terminus, the 372-residue chain is 4-hydroxy-3-methylbut-2-en-1-yl diphosphate synthase (flavodoxin) (372 aa).

4 residues coordinate [4Fe-4S] cluster: cysteine 270, cysteine 273, cysteine 305, and glutamate 312.

This sequence belongs to the IspG family. [4Fe-4S] cluster is required as a cofactor.

The enzyme catalyses (2E)-4-hydroxy-3-methylbut-2-enyl diphosphate + oxidized [flavodoxin] + H2O + 2 H(+) = 2-C-methyl-D-erythritol 2,4-cyclic diphosphate + reduced [flavodoxin]. It functions in the pathway isoprenoid biosynthesis; isopentenyl diphosphate biosynthesis via DXP pathway; isopentenyl diphosphate from 1-deoxy-D-xylulose 5-phosphate: step 5/6. Converts 2C-methyl-D-erythritol 2,4-cyclodiphosphate (ME-2,4cPP) into 1-hydroxy-2-methyl-2-(E)-butenyl 4-diphosphate. The polypeptide is 4-hydroxy-3-methylbut-2-en-1-yl diphosphate synthase (flavodoxin) (Salmonella arizonae (strain ATCC BAA-731 / CDC346-86 / RSK2980)).